The sequence spans 180 residues: ATP-dependent protease subunit HslV (180 aa).

Residue T7 is part of the active site. Residues A163, C166, and T169 each contribute to the Na(+) site.

This sequence belongs to the peptidase T1B family. HslV subfamily. In terms of assembly, a double ring-shaped homohexamer of HslV is capped on each side by a ring-shaped HslU homohexamer. The assembly of the HslU/HslV complex is dependent on binding of ATP.

It is found in the cytoplasm. The enzyme catalyses ATP-dependent cleavage of peptide bonds with broad specificity.. Allosterically activated by HslU binding. Protease subunit of a proteasome-like degradation complex believed to be a general protein degrading machinery. This chain is ATP-dependent protease subunit HslV, found in Cytophaga hutchinsonii (strain ATCC 33406 / DSM 1761 / CIP 103989 / NBRC 15051 / NCIMB 9469 / D465).